A 283-amino-acid polypeptide reads, in one-letter code: Protease HtpX homolog (283 aa).

2 consecutive transmembrane segments (helical) span residues 7–27 (TAVL…VLGG) and 29–49 (QGMA…YWFS). Histidine 131 is a binding site for Zn(2+). The active site involves glutamate 132. Zn(2+) is bound at residue histidine 135. A run of 2 helical transmembrane segments spans residues 146–166 (ISAT…FFGG) and 177–197 (IAGI…QMAI). Glutamate 202 provides a ligand contact to Zn(2+).

The protein belongs to the peptidase M48B family. Zn(2+) serves as cofactor.

It localises to the cell inner membrane. The sequence is that of Protease HtpX homolog from Methylibium petroleiphilum (strain ATCC BAA-1232 / LMG 22953 / PM1).